Reading from the N-terminus, the 638-residue chain is MHLTPHWIPLVASLGLLAGGSFASAAEEAFDLWNECAKACVLDLKDGVRSSRMSVDPAIADTNGQGVLHYSMVLEGGNDALKLAIDNALSITSDGLTIRLEGGVEPNKPVRYSYTRQARGSWSLNWLVPIGHEKPSNIKVFIHELNAGNQLSHMSPIYTIEMGDELLAKLARDATFFVRAHESNEMQPTLAISHAGVSVVMAQAQPRREKRWSEWASGKVLCLLDPLDGVYNYLAQQRCNLDDTWEGKIYRVLAGNPAKHDLDIKPTVISHRLHFPEGGSLAALTAHQACHLPLETFTRHRQPRGWEQLEQCGYPVQRLVALYLAARLSWNQVDQVIRNALASPGSGGDLGEAIREQPEQARLALTLAAAESERFVRQGTGNDEAGAASADVVSLTCPVAAGECAGPADSGDALLERNYPTGAEFLGDGGDISFSTRGTQNWTVERLLQAHRQLEERGYVFVGYHGTFLEAAQSIVFGGVRARSQDLDAIWRGFYIAGDPALAYGYAQDQEPDARGRIRNGALLRVYVPRSSLPGFYRTGLTLAAPEAAGEVERLIGHPLPLRLDAITGPEEEGGRLETILGWPLAERTVVIPSAIPTDPRNVGGDLDPSSIPDKEQAISALPDYASQPGKPPREDLK.

The first 25 residues, 1–25 (MHLTPHWIPLVASLGLLAGGSFASA), serve as a signal peptide directing secretion. Residues 26 to 277 (AEEAFDLWNE…VISHRLHFPE (252 aa)) are domain Ia (required for target cell recognition). Positions 278-389 (GGSLAALTAH…TGNDEAGAAS (112 aa)) are II (required for translocation in target cell cytoplasm). A disulfide bridge links cysteine 290 with cysteine 312. A domain Ib region spans residues 390–429 (ADVVSLTCPVAAGECAGPADSGDALLERNYPTGAEFLGDG). The interval 430-638 (GDISFSTRGT…PGKPPREDLK (209 aa)) is III (required for ADP-ribosyl activity). Residues 465-467 (HGT), serine 474, 479-485 (GVRARSQ), and glutamate 578 each bind NAD(+). The active site involves glutamate 578. The interval 596 to 638 (IPTDPRNVGGDLDPSSIPDKEQAISALPDYASQPGKPPREDLK) is disordered.

Post-translationally, the 8 cysteines participate in intrachain disulfide bonds.

It catalyses the reaction diphthamide-[translation elongation factor 2] + NAD(+) = N-(ADP-D-ribosyl)diphthamide-[translation elongation factor 2] + nicotinamide + H(+). With respect to regulation, inhibited by 1,8-naphthalimide (NAP) as well as a number of poly(ADP-ribose) polymerase inhibitors and other compounds. In terms of biological role, an NAD-dependent ADP-ribosyltransferase (ADPRT). Catalyzes the transfer of the ADP ribosyl moiety of oxidized NAD (NAD(+)) onto eukaryotic elongation factor 2 (eEF-2) thus arresting protein synthesis. Has an LD(50) of 65 ng/ml against the human lung epithelial cell line C38. This Pseudomonas aeruginosa (strain ATCC 15692 / DSM 22644 / CIP 104116 / JCM 14847 / LMG 12228 / 1C / PRS 101 / PAO1) protein is Exotoxin A.